A 956-amino-acid polypeptide reads, in one-letter code: Lon protease homolog, mitochondrial 1 (956 aa).

2 disordered regions span residues 37-57 (NNNN…NNNN) and 83-123 (KKKG…GNEK). A compositionally biased stretch (basic and acidic residues) spans 91–123 (NNDDNDNEKNEKNEKKVKNEKKEKNEKNDGNEK). In terms of domain architecture, Lon N-terminal spans 159-357 (VVIYPSNSVN…MLYHMILNEQ (199 aa)). Residue 511-518 (GPPGTGKT) participates in ATP binding. A Lon proteolytic domain is found at 747–945 (VTPIGVVNGL…KDVFEVAFPN (199 aa)). Residues 777–795 (KPLSSLPPSQQQQNQLEPS) are compositionally biased toward low complexity. Residues 777 to 800 (KPLSSLPPSQQQQNQLEPSIKTTG) form a disordered region. Catalysis depends on residues Ser851 and Lys894.

The protein belongs to the peptidase S16 family. Homohexamer or homoheptamer. Organized in a ring with a central cavity.

It localises to the mitochondrion matrix. It carries out the reaction Hydrolysis of proteins in presence of ATP.. Functionally, ATP-dependent serine protease that mediates the selective degradation of misfolded, unassembled or oxidatively damaged polypeptides as well as certain short-lived regulatory proteins in the mitochondrial matrix. May also have a chaperone function in the assembly of inner membrane protein complexes. Participates in the regulation of mitochondrial gene expression and in the maintenance of the integrity of the mitochondrial genome. Binds to mitochondrial DNA in a site-specific manner. The sequence is that of Lon protease homolog, mitochondrial 1 from Dictyostelium discoideum (Social amoeba).